The primary structure comprises 202 residues: IMP cyclohydrolase (202 aa).

The protein belongs to the archaeal IMP cyclohydrolase family.

It carries out the reaction IMP + H2O = 5-formamido-1-(5-phospho-D-ribosyl)imidazole-4-carboxamide. The protein operates within purine metabolism; IMP biosynthesis via de novo pathway; IMP from 5-formamido-1-(5-phospho-D-ribosyl)imidazole-4-carboxamide: step 1/1. Its function is as follows. Catalyzes the cyclization of 5-formylamidoimidazole-4-carboxamide ribonucleotide to IMP. This Methanosphaera stadtmanae (strain ATCC 43021 / DSM 3091 / JCM 11832 / MCB-3) protein is IMP cyclohydrolase.